Consider the following 686-residue polypeptide: Eukaryotic translation initiation factor 3 subunit B (686 aa).

Residues 1–29 (MAKKHAGADANDSDYNEEPNFEDPPGFVD) are disordered. Residues 11 to 21 (NDSDYNEEPNF) are compositionally biased toward acidic residues. One can recognise an RRM domain in the interval 53-137 (SVVVVDNIPK…HTFAVNLFTD (85 aa)). 5 WD repeats span residues 203–242 (TRER…KIQK), 289–327 (DGMS…LLDL), 330–365 (IKIP…TLME), 438–480 (EIRE…KPSL), and 526–571 (PDHF…IKRT). Residues 590-642 (AEEKQKEIKKNLKKYYAVFEQKDRLRLTRASKELLEKRAQLRETFMEYRNKRI) are a coiled coil.

It belongs to the eIF-3 subunit B family. In terms of assembly, component of the eukaryotic translation initiation factor 3 (eIF-3) complex. The eIF-3 complex interacts with pix. Interacts with mxt.

It localises to the cytoplasm. Functionally, RNA-binding component of the eukaryotic translation initiation factor 3 (eIF-3) complex, which is involved in protein synthesis of a specialized repertoire of mRNAs and, together with other initiation factors, stimulates binding of mRNA and methionyl-tRNAi to the 40S ribosome. The eIF-3 complex specifically targets and initiates translation of a subset of mRNAs involved in cell proliferation. This is Eukaryotic translation initiation factor 3 subunit B from Drosophila ananassae (Fruit fly).